The following is a 184-amino-acid chain: Adenine phosphoribosyltransferase (184 aa).

This sequence belongs to the purine/pyrimidine phosphoribosyltransferase family. In terms of assembly, homodimer.

The protein resides in the cytoplasm. The enzyme catalyses AMP + diphosphate = 5-phospho-alpha-D-ribose 1-diphosphate + adenine. It participates in purine metabolism; AMP biosynthesis via salvage pathway; AMP from adenine: step 1/1. Functionally, catalyzes a salvage reaction resulting in the formation of AMP, that is energically less costly than de novo synthesis. The chain is Adenine phosphoribosyltransferase from Mycobacterium marinum (strain ATCC BAA-535 / M).